The primary structure comprises 163 residues: Protein-export protein SecB (163 aa).

The protein belongs to the SecB family. As to quaternary structure, homotetramer, a dimer of dimers. One homotetramer interacts with 1 SecA dimer.

Its subcellular location is the cytoplasm. In terms of biological role, one of the proteins required for the normal export of preproteins out of the cell cytoplasm. It is a molecular chaperone that binds to a subset of precursor proteins, maintaining them in a translocation-competent state. It also specifically binds to its receptor SecA. This Shewanella woodyi (strain ATCC 51908 / MS32) protein is Protein-export protein SecB.